Consider the following 814-residue polypeptide: Phosphatidylinositol 3-kinase VPS34 (814 aa).

In terms of domain architecture, C2 PI3K-type spans 25–177 (LDGNLPVKKS…EKLMNKYERG (153 aa)). One can recognise a PIK helical domain in the interval 274–449 (DRDLKPSNIE…YSTYELLEEN (176 aa)). Positions 532–799 (VAGESSLFKS…LINESVSALF (268 aa)) constitute a PI3K/PI4K catalytic domain. The tract at residues 538 to 544 (LFKSALH) is G-loop. The catalytic loop stretch occupies residues 668-676 (GIGDRHLDN). The tract at residues 687–708 (HVDFAFILGRDPKPFPPPMKLC) is activation loop.

The protein belongs to the PI3/PI4-kinase family. In terms of assembly, interacts with VPS15. Component of a complex made of VPS38/USL1 and PI3K main subunits such as VPS15, ATG6/VPS30 and VPS34. Binds directly to VPS38/USL1.

It catalyses the reaction a 1,2-diacyl-sn-glycero-3-phospho-(1D-myo-inositol) + ATP = a 1,2-diacyl-sn-glycero-3-phospho-(1D-myo-inositol-3-phosphate) + ADP + H(+). With respect to regulation, the PI3K inhibitor LY294002 affects phosphatidylinositol 3-phosphate (PI3P) levels and triggers a decrease in proline, hydrophobic and aromatic amino acids, and sugars (e.g. raffinose) accumulation in response to salt treatment correlated with lower P5CS1 expression and higher ProDH1 expression, genes involved in proline biosynthesis and catabolism, respectively. In terms of biological role, involved in the negative regulation of proline, hydrophobic and aromatic amino acids accumulation, especially in response to salt (NaCl), either through inhibition of their synthesis and/or promotion of their catabolism. Triggers defense responses (e.g. pathogenesis related (PR1 and PR5) gene expression and hydrogen peroxide H(2)O(2) burst) to the bacterial pathogen compatible Pseudomonas syringae pv tomato DC3000 (Pst DC3000) and incompatible Pst DC3000 (avrRpt2), by regulating reactive ogygen species (ROS) production and by promoting stomatal closure. This is Phosphatidylinositol 3-kinase VPS34 from Arabidopsis thaliana (Mouse-ear cress).